We begin with the raw amino-acid sequence, 293 residues long: Heterogeneous nuclear ribonucleoprotein C-like 4 (293 aa).

Residues 16–87 (SRVFIGNLNT…QVVDINLAAE (72 aa)) form the RRM domain. Disordered stretches follow at residues 140-177 (VVPS…KLKG) and 208-293 (HCKQ…QDDS). A coiled-coil region spans residues 177–208 (GDDLQAIKQELTQIKQKVDSLLENLEKIEKEH). 2 stretches are compositionally biased toward basic and acidic residues: residues 208–222 (HCKQ…KSEE) and 229–240 (SKKDKTHVKMES). Positions 242–263 (GGADDSVEEGDLLCDDDNEDQG) are enriched in acidic residues. The span at 269-293 (LIKDDEKGAEEGEDDRDRANGQDDS) shows a compositional bias: basic and acidic residues.

Belongs to the RRM HNRPC family. RALY subfamily.

It localises to the nucleus. The chain is Heterogeneous nuclear ribonucleoprotein C-like 4 from Homo sapiens (Human).